Consider the following 384-residue polypeptide: Mannitol-1-phosphate 5-dehydrogenase (384 aa).

5–16 (AVHFGAGNIGRG) provides a ligand contact to NAD(+).

This sequence belongs to the mannitol dehydrogenase family.

It carries out the reaction D-mannitol 1-phosphate + NAD(+) = beta-D-fructose 6-phosphate + NADH + H(+). The polypeptide is Mannitol-1-phosphate 5-dehydrogenase (Vibrio cholerae serotype O1 (strain ATCC 39541 / Classical Ogawa 395 / O395)).